The chain runs to 299 residues: ATP phosphoribosyltransferase (299 aa).

It belongs to the ATP phosphoribosyltransferase family. Long subfamily. Equilibrium between an active dimeric form, an inactive hexameric form and higher aggregates. Interconversion between the various forms is largely reversible and is influenced by the natural substrates and inhibitors of the enzyme. The cofactor is Mg(2+).

The protein localises to the cytoplasm. The catalysed reaction is 1-(5-phospho-beta-D-ribosyl)-ATP + diphosphate = 5-phospho-alpha-D-ribose 1-diphosphate + ATP. It participates in amino-acid biosynthesis; L-histidine biosynthesis; L-histidine from 5-phospho-alpha-D-ribose 1-diphosphate: step 1/9. Feedback inhibited by histidine. Its function is as follows. Catalyzes the condensation of ATP and 5-phosphoribose 1-diphosphate to form N'-(5'-phosphoribosyl)-ATP (PR-ATP). Has a crucial role in the pathway because the rate of histidine biosynthesis seems to be controlled primarily by regulation of HisG enzymatic activity. This Salmonella agona (strain SL483) protein is ATP phosphoribosyltransferase.